A 376-amino-acid chain; its full sequence is Cytochrome b (376 aa).

4 helical membrane-spanning segments follow: residues 28–48 (YGFL…FLAS), 72–94 (WCFR…LHIL), 107–127 (SWIS…IGYV), and 169–189 (FFVL…IHIF). Heme b is bound by residues H78 and H92. Residues H173 and H187 each coordinate heme b. H192 contacts a ubiquinone. The next 4 helical transmembrane spans lie at 214–234 (LLSL…IQSI), 274–294 (IPSK…LFLL), 317–337 (VPII…CPLP), and 340–360 (IFIL…LFSL).

It belongs to the cytochrome b family. In terms of assembly, the main subunits of complex b-c1 are: cytochrome b, cytochrome c1 and the Rieske protein. Heme b serves as cofactor.

It is found in the mitochondrion inner membrane. Component of the ubiquinol-cytochrome c reductase complex (complex III or cytochrome b-c1 complex) that is part of the mitochondrial respiratory chain. The b-c1 complex mediates electron transfer from ubiquinol to cytochrome c. Contributes to the generation of a proton gradient across the mitochondrial membrane that is then used for ATP synthesis. This chain is Cytochrome b (MT-CYB), found in Plasmodium berghei.